The primary structure comprises 67 residues: Conotoxin Cal14.2c (67 aa).

A signal peptide spans M1–G20. Residues F21–Q48 constitute a propeptide that is removed on maturation.

It belongs to the conotoxin L superfamily. Post-translationally, contains 2 disulfide bonds. As to expression, expressed by the venom duct.

Its subcellular location is the secreted. In terms of biological role, probable neurotoxin with unknown target. Possibly targets ion channels. The chain is Conotoxin Cal14.2c from Californiconus californicus (California cone).